We begin with the raw amino-acid sequence, 334 residues long: Holliday junction branch migration complex subunit RuvB (334 aa).

Residues Ala-4 to Tyr-184 are large ATPase domain (RuvB-L). ATP contacts are provided by residues Arg-24, Gly-65, Lys-68, Thr-69, Thr-70, Glu-131–Tyr-133, Arg-174, Tyr-184, and Arg-221. Residue Thr-69 coordinates Mg(2+). The interval Asn-185–Asp-255 is small ATPAse domain (RuvB-S). The tract at residues Gly-258 to Glu-334 is head domain (RuvB-H). 3 residues coordinate DNA: Arg-294, Arg-313, and Arg-318.

This sequence belongs to the RuvB family. Homohexamer. Forms an RuvA(8)-RuvB(12)-Holliday junction (HJ) complex. HJ DNA is sandwiched between 2 RuvA tetramers; dsDNA enters through RuvA and exits via RuvB. An RuvB hexamer assembles on each DNA strand where it exits the tetramer. Each RuvB hexamer is contacted by two RuvA subunits (via domain III) on 2 adjacent RuvB subunits; this complex drives branch migration. In the full resolvosome a probable DNA-RuvA(4)-RuvB(12)-RuvC(2) complex forms which resolves the HJ.

The protein resides in the cytoplasm. The catalysed reaction is ATP + H2O = ADP + phosphate + H(+). In terms of biological role, the RuvA-RuvB-RuvC complex processes Holliday junction (HJ) DNA during genetic recombination and DNA repair, while the RuvA-RuvB complex plays an important role in the rescue of blocked DNA replication forks via replication fork reversal (RFR). RuvA specifically binds to HJ cruciform DNA, conferring on it an open structure. The RuvB hexamer acts as an ATP-dependent pump, pulling dsDNA into and through the RuvAB complex. RuvB forms 2 homohexamers on either side of HJ DNA bound by 1 or 2 RuvA tetramers; 4 subunits per hexamer contact DNA at a time. Coordinated motions by a converter formed by DNA-disengaged RuvB subunits stimulates ATP hydrolysis and nucleotide exchange. Immobilization of the converter enables RuvB to convert the ATP-contained energy into a lever motion, pulling 2 nucleotides of DNA out of the RuvA tetramer per ATP hydrolyzed, thus driving DNA branch migration. The RuvB motors rotate together with the DNA substrate, which together with the progressing nucleotide cycle form the mechanistic basis for DNA recombination by continuous HJ branch migration. Branch migration allows RuvC to scan DNA until it finds its consensus sequence, where it cleaves and resolves cruciform DNA. The polypeptide is Holliday junction branch migration complex subunit RuvB (Shewanella sp. (strain MR-4)).